The primary structure comprises 454 residues: Transmembrane protein adipocyte-associated 1 homolog (454 aa).

N-linked (GlcNAc...) asparagine glycosylation is found at Asn26 and Asn44. 5 consecutive transmembrane segments (helical) span residues 80–100, 113–133, 151–171, 180–200, and 224–244; these read AILI…TSVI, AFTL…VYSM, IIIK…GLLF, ILIA…VQVI, and FVFW…IMCL. Asn258 carries N-linked (GlcNAc...) asparagine glycosylation. The next 2 membrane-spanning stretches (helical) occupy residues 262–282 and 290–310; these read FIYC…AALI and LCFV…IIYF. N-linked (GlcNAc...) asparagine glycosylation is found at Asn322 and Asn323. Residues 408–454 are disordered; that stretch reads RTGSDDFAHHRDSMLSEPSTGTTTRHLKGLGPQGSLVFEEDPSSLRL. The segment covering 410–421 has biased composition (basic and acidic residues); it reads GSDDFAHHRDSM. A compositionally biased stretch (acidic residues) spans 445–454; it reads FEEDPSSLRL.

The protein belongs to the UPF0359 family.

The protein localises to the membrane. This is Transmembrane protein adipocyte-associated 1 homolog (tpra-1) from Caenorhabditis briggsae.